A 91-amino-acid polypeptide reads, in one-letter code: Small ribosomal subunit protein uS19c (91 aa).

It belongs to the universal ribosomal protein uS19 family.

The protein resides in the plastid. Its subcellular location is the organellar chromatophore. Its function is as follows. Protein S19 forms a complex with S13 that binds strongly to the 16S ribosomal RNA. The protein is Small ribosomal subunit protein uS19c of Paulinella chromatophora.